An 879-amino-acid polypeptide reads, in one-letter code: mRNA-binding protein PUF3 (879 aa).

Residue T83 is modified to Phosphothreonine. 2 positions are modified to phosphoserine: S207 and S210. Disordered stretches follow at residues 222-256 (ESDKNFNKLNRNTTNSGSLYHSSSNSGSSASLESE), 344-417 (PANE…QQQQ), and 443-512 (KKRN…QQTY). A compositionally biased stretch (low complexity) spans 237–255 (SGSLYHSSSNSGSSASLES). Pro residues predominate over residues 370 to 395 (SSPPNNSPFPFAYPNPMMFMPPPPLS). Composition is skewed to low complexity over residues 398–417 (QQQQQQQQQQQQEDQQQQQQ), 449–463 (NHPANNSNNANKQAN), 472–491 (TKNTSKKNASSKSNESTANN), and 501–512 (HSQSLQQQQQTY). Residues 513–871 (HRSPLLEQLR…RHLASVEKLA (359 aa)) form the PUM-HD domain. Pumilio repeat units lie at residues 538 to 573 (DIFGHSLEFCKDQHGSRFIQRELATSPASEKEVIFN), 574 to 609 (EIRDDAIELSNDVFGNYVIQKFFEFGSKIQKNTLVD), 610 to 645 (QFKGNMKQLSLQMYACRVIQKALEYIDSNQRIELVL), 646 to 681 (ELSDSVLQMIKDQNGNHVIQKAIETIPIEKLPFILS), 682 to 717 (SLTGHIYHLSTHSYGCRVIQRLLEFGSSEDQESILN), 718 to 759 (ELKD…EIIE), 760 to 795 (TVANNVVEYSKHKFASNVVEKSILYGSKNQKDLIIS), and 807 to 844 (NLEDDSPMILMIKDQFANYVIQKLVNVSEGEGKKLIVI).

This sequence belongs to the PUF3 family.

It localises to the mitochondrion outer membrane. The protein localises to the cytoplasm. Functionally, RNA-binding protein involved in post-transcriptional regulation. Negatively regulates expression of COX17 by binding to the 3'-UTR of COX17 mRNA. Promotes decay of COX17 mRNA by enhancing its rate of deadenylation and subsequent turnover. Predominantly binds to mRNAs encoding mitochondrial proteins and localizes them to the vicinity of mitochondria for translation. Regulates mitochondrial biogenesis, motility and morphology. The chain is mRNA-binding protein PUF3 (PUF3) from Saccharomyces cerevisiae (strain ATCC 204508 / S288c) (Baker's yeast).